The sequence spans 143 residues: Large ribosomal subunit protein uL13 (143 aa).

This sequence belongs to the universal ribosomal protein uL13 family. As to quaternary structure, part of the 50S ribosomal subunit.

Functionally, this protein is one of the early assembly proteins of the 50S ribosomal subunit, although it is not seen to bind rRNA by itself. It is important during the early stages of 50S assembly. This Prochlorococcus marinus (strain MIT 9301) protein is Large ribosomal subunit protein uL13.